The following is a 302-amino-acid chain: S-adenosylmethionine sensor upstream of mTORC1 (302 aa).

Residues R73, G132, and D150 each contribute to the S-adenosyl-L-homocysteine site. The S-adenosyl-L-methionine site is built by R73, G132, D150, L151, D162, F163, and S196. Residues D162, F163, and S196 each contribute to the S-adenosyl-L-homocysteine site.

This sequence belongs to the BMT2/SAMTOR family.

Functionally, S-adenosyl-L-methionine-binding protein. It is unclear whether this protein acts as a sensor of S-adenosyl-L-methionine to signal methionine sufficiency to mTORC1. Probably acts as a S-adenosyl-L-methionine-dependent methyltransferase. The sequence is that of S-adenosylmethionine sensor upstream of mTORC1 from Drosophila melanogaster (Fruit fly).